A 269-amino-acid chain; its full sequence is Thiazole synthase (269 aa).

Residue K109 is the Schiff-base intermediate with DXP of the active site. Residues G170, 196–197 (AG), and 218–219 (NT) contribute to the 1-deoxy-D-xylulose 5-phosphate site.

Belongs to the ThiG family. In terms of assembly, homotetramer. Forms heterodimers with either ThiH or ThiS.

The protein localises to the plastid. It is found in the chloroplast. The enzyme catalyses [ThiS sulfur-carrier protein]-C-terminal-Gly-aminoethanethioate + 2-iminoacetate + 1-deoxy-D-xylulose 5-phosphate = [ThiS sulfur-carrier protein]-C-terminal Gly-Gly + 2-[(2R,5Z)-2-carboxy-4-methylthiazol-5(2H)-ylidene]ethyl phosphate + 2 H2O + H(+). The protein operates within cofactor biosynthesis; thiamine diphosphate biosynthesis. Its function is as follows. Catalyzes the rearrangement of 1-deoxy-D-xylulose 5-phosphate (DXP) to produce the thiazole phosphate moiety of thiamine. Sulfur is provided by the thiocarboxylate moiety of the carrier protein ThiS. In vitro, sulfur can be provided by H(2)S. This chain is Thiazole synthase, found in Thalassiosira pseudonana (Marine diatom).